Reading from the N-terminus, the 1004-residue chain is Protein Wnt-5 (1004 aa).

An N-terminal signal peptide occupies residues 1–29; the sequence is MSCYRKRHFLLWLLRAVCMLHLTARGAYA. N-linked (GlcNAc...) asparagine glycans are attached at residues Asn-60, Asn-66, Asn-115, and Asn-219. The disordered stretch occupies residues 238-298; the sequence is QKDKAKTSGA…NPGEQPIGGY (61 aa). N-linked (GlcNAc...) asparagine glycans are attached at residues Asn-307 and Asn-341. The tract at residues 310-407 is disordered; that stretch reads LLKPTDTDSH…ERDEWFRGQS (98 aa). Residues 389 to 403 are compositionally biased toward basic and acidic residues; sequence RREEQQRQRERDEWF. The N-linked (GlcNAc...) asparagine glycan is linked to Asn-422. The disordered stretch occupies residues 438–472; it reads KVSSEGSDGELLSRVERSQPSISSSSSSSSSSSRK. Over residues 458-470 the composition is skewed to low complexity; that stretch reads SISSSSSSSSSSS. 4 N-linked (GlcNAc...) asparagine glycosylation sites follow: Asn-484, Asn-485, Asn-528, and Asn-593. 3 disulfides stabilise this stretch: Cys-583/Cys-594, Cys-633/Cys-641, and Cys-643/Cys-661. Asn-724 carries an N-linked (GlcNAc...) asparagine glycan. A disordered region spans residues 790-822; that stretch reads FFKGEQQPRKKKRKNQRAAADAPAYPRNGIKES. 8 disulfide bridges follow: Cys-862-Cys-876, Cys-864-Cys-871, Cys-933-Cys-964, Cys-949-Cys-959, Cys-963-Cys-1003, Cys-979-Cys-994, Cys-981-Cys-991, and Cys-986-Cys-987. Residue Ser-868 is the site of O-palmitoleoyl serine; by PORCN attachment. A glycan (N-linked (GlcNAc...) asparagine) is linked at Asn-952.

It belongs to the Wnt family. In terms of assembly, interacts with porcupine (por). Glycosylated, glycosylation is stimulated by porcupine at the ER. In terms of processing, palmitoleoylated by porcupine. The lipid group functions as a sorting signal, targeting the ligand to polarized vesicles that transport Wnt5 to unique sites at the cell surface. Depalmitoleoylated by notum, leading to inhibit Wnt signaling pathway. As to expression, dynamic expression pattern during embryogenesis. Expression is seen in the limb primordia of the head and thoracic segments, mesodermal and neurogenic regions.

The protein localises to the secreted. The protein resides in the extracellular space. It is found in the extracellular matrix. Functionally, binds as a ligand to a family of frizzled seven-transmembrane receptors and acts through a cascade of genes on the nucleus. Probable developmental protein. May be a signaling molecule which affects the development of discrete regions of tissues. Is likely to signal over only few cell diameters. May have a role in limb and CNS development; may be a downstream target of Dll that acts in the specification of these primordia. In Drosophila melanogaster (Fruit fly), this protein is Protein Wnt-5 (Wnt5).